The primary structure comprises 364 residues: Isopentenyl-diphosphate delta-isomerase (364 aa).

Residues 1–13 (MSSAQRKDDHVRL) are compositionally biased toward basic and acidic residues. Residues 1–24 (MSSAQRKDDHVRLATEQQRAHSGR) form a disordered region. 6 to 7 (RK) serves as a coordination point for substrate. FMN is bound by residues 64–66 (AMT), Ser94, and Asn123. Position 94–96 (94–96 (SMH)) interacts with substrate. Residue Gln153 coordinates substrate. Position 154 (Glu154) interacts with Mg(2+). Residues Lys185, Ser210, Thr215, 259-261 (GIR), and 280-281 (SG) each bind FMN.

Belongs to the IPP isomerase type 2 family. Homooctamer. Dimer of tetramers. The cofactor is FMN. NADPH is required as a cofactor. Requires Mg(2+) as cofactor.

It is found in the cytoplasm. It carries out the reaction isopentenyl diphosphate = dimethylallyl diphosphate. Its function is as follows. Involved in the biosynthesis of isoprenoids. Catalyzes the 1,3-allylic rearrangement of the homoallylic substrate isopentenyl (IPP) to its allylic isomer, dimethylallyl diphosphate (DMAPP). In Kitasatospora griseola (Streptomyces griseolosporeus), this protein is Isopentenyl-diphosphate delta-isomerase.